The sequence spans 198 residues: Peptide deformylase (198 aa).

2 residues coordinate Fe cation: cysteine 123 and histidine 167. Glutamate 168 is a catalytic residue. Histidine 171 contributes to the Fe cation binding site.

Belongs to the polypeptide deformylase family. Fe(2+) is required as a cofactor.

It catalyses the reaction N-terminal N-formyl-L-methionyl-[peptide] + H2O = N-terminal L-methionyl-[peptide] + formate. Removes the formyl group from the N-terminal Met of newly synthesized proteins. Requires at least a dipeptide for an efficient rate of reaction. N-terminal L-methionine is a prerequisite for activity but the enzyme has broad specificity at other positions. The protein is Peptide deformylase of Ureaplasma parvum serovar 3 (strain ATCC 27815 / 27 / NCTC 11736).